A 389-amino-acid polypeptide reads, in one-letter code: S-adenosylmethionine synthase 3 (389 aa).

Glu9 provides a ligand contact to Mg(2+). Residue His15 participates in ATP binding. Glu43 contacts K(+). Glu56 and Gln99 together coordinate L-methionine. Residues 167–169 (DGK), 235–238 (SGRF), Asp246, 252–253 (RK), Ala269, Lys273, and Lys277 contribute to the ATP site. Asp246 is an L-methionine binding site. Position 277 (Lys277) interacts with L-methionine.

Belongs to the AdoMet synthase family. As to quaternary structure, homotetramer. Mn(2+) is required as a cofactor. It depends on Mg(2+) as a cofactor. Co(2+) serves as cofactor. Requires K(+) as cofactor.

Its subcellular location is the cytoplasm. It carries out the reaction L-methionine + ATP + H2O = S-adenosyl-L-methionine + phosphate + diphosphate. It functions in the pathway amino-acid biosynthesis; S-adenosyl-L-methionine biosynthesis; S-adenosyl-L-methionine from L-methionine: step 1/1. Catalyzes the formation of S-adenosylmethionine from methionine and ATP. The reaction comprises two steps that are both catalyzed by the same enzyme: formation of S-adenosylmethionine (AdoMet) and triphosphate, and subsequent hydrolysis of the triphosphate. The polypeptide is S-adenosylmethionine synthase 3 (METK3) (Vitis vinifera (Grape)).